The chain runs to 120 residues: UPF0145 protein Bcenmc03_5217 (120 aa).

The protein belongs to the UPF0145 family.

This Burkholderia orbicola (strain MC0-3) protein is UPF0145 protein Bcenmc03_5217.